A 373-amino-acid chain; its full sequence is MGSQVSVESGALHVVIVGGGFGGIAAASQLQALNVPFMLVDMKDSFHHNVAALRASVETGFAKKTFISYSVTFKDNFRQGLVVGIDLKNQMVLLQGGEALPFSHLILATGSTGPFPGKFNEVSSQQAAIQAYEDMVRQVQRSRFIVVVGGGSAGVEMAAEIKTEYPEKEVTLIHSQVALADKELLPSVRQEVKEILLRKGVQLLLSERVSNLEELPLNEYREYIKVQTDKGTEVATNLVILCTGIKINSSAYRKAFESRLASSGALRVNEHLQVEGHSNVYAIGDCADVRTPKMAYLAGLHANIAVANIVNSVKQRPLQAYKPGALTFLLSMGRNDGVGQISGFYVGRLMVRLTKSRDLFVSTSWKTMRQSPP.

The N-myristoyl glycine moiety is linked to residue Gly2. Residues 7–27 form a helical membrane-spanning segment; that stretch reads VESGALHVVIVGGGFGGIAAA. 6-hydroxy-FAD-binding positions include 18 to 22, Arg54, and Val82; that span reads GGGFG. Lys168 carries the N6-acetyllysine; by KAT2B modification. A 6-hydroxy-FAD-binding site is contributed by Asp285.

It belongs to the FAD-dependent oxidoreductase family. In terms of assembly, interacts with importin subunits KPNA2 and IPO5; this interaction likely mediates the translocation into the nucleus upon oxidative stress. Requires 6-hydroxy-FAD as cofactor. N-myristoylation at Gly-2 mediates the recruitment to lipid droplets and plasma membrane, enabling its anti-lipid peroxidation activity. In terms of processing, acetylation at Lys-168 prevents AIFM2 ubiquitination and degradation, thereby inhibiting ferroptosis. KAT2B mediates acetylation at Lys-168, while HDAC3 removes it. Post-translationally, ubiquitinated. AIFM2 undergoes 'Lys-29'-ubiquitination and proteasomal degradation, which is inhibited by acetylation at Lys-168. Detected in most normal tissues as two transcripts of 1.8 and 4.0 kb in length, respectively. Highly expressed in heart, moderately in liver and skeletal muscles, and expressed at low levels in placenta, lung, kidney, and pancreas. Both transcripts expressed following p53/TP53 induction. The shorter 1.8 kb transcript seems to be the major transcript in EB1 colon cancer cells.

It localises to the lipid droplet. It is found in the cell membrane. The protein resides in the cytoplasm. The protein localises to the mitochondrion membrane. Its subcellular location is the nucleus. It catalyses the reaction ubiquinone-10 + NADH + H(+) = ubiquinol-10 + NAD(+). The enzyme catalyses phylloquinone + NADH + H(+) = phylloquinol + NAD(+). The catalysed reaction is menaquinone-4 + NADH + H(+) = menaquinol-4 + NAD(+). It carries out the reaction menadione + NADH + H(+) = menadiol + NAD(+). Its activity is regulated as follows. The modification by 4-hydroxy-2-nonenal (HNE) adduction in mitochondria results in loss of the oxidoreductase activity and activation of a novel function in mitochondrial oxidative stress signaling. Functionally, a NAD(P)H-dependent oxidoreductase that acts as a key inhibitor of ferroptosis. At the plasma membrane, catalyzes reduction of coenzyme Q/ubiquinone-10 to ubiquinol-10, a lipophilic radical-trapping antioxidant that prevents lipid oxidative damage and consequently ferroptosis. Acts in parallel to GPX4 to suppress phospholipid peroxidation and ferroptosis. This anti-ferroptotic function is independent of cellular glutathione levels. Also acts as a potent radical-trapping antioxidant by mediating warfarin-resistant vitamin K reduction in the canonical vitamin K cycle: catalyzes NAD(P)H-dependent reduction of vitamin K (phylloquinone, menaquinone-4 and menadione) to hydroquinone forms. Hydroquinones act as potent radical-trapping antioxidants inhibitor of phospholipid peroxidation and ferroptosis. May play a role in mitochondrial stress signaling. Upon oxidative stress, associates with the lipid peroxidation end product 4-hydroxy-2-nonenal (HNE) forming a lipid adduct devoid of oxidoreductase activity, which then translocates from mitochondria into the nucleus triggering DNA damage and cell death. Capable of DNA binding in a non-sequence specific way. The polypeptide is Ferroptosis suppressor protein 1 (Homo sapiens (Human)).